Consider the following 229-residue polypeptide: Dephospho-CoA kinase (229 aa).

The region spanning 3–203 (TVGLTGGIGS…ARRDAKATAK (201 aa)) is the DPCK domain. 11–16 (GSGKSA) provides a ligand contact to ATP. Positions 203-229 (KATAKAETVASGTDTAASGTDTAAPAG) are disordered.

The protein belongs to the CoaE family.

Its subcellular location is the cytoplasm. The catalysed reaction is 3'-dephospho-CoA + ATP = ADP + CoA + H(+). Its pathway is cofactor biosynthesis; coenzyme A biosynthesis; CoA from (R)-pantothenate: step 5/5. Its function is as follows. Catalyzes the phosphorylation of the 3'-hydroxyl group of dephosphocoenzyme A to form coenzyme A. The protein is Dephospho-CoA kinase of Frankia casuarinae (strain DSM 45818 / CECT 9043 / HFP020203 / CcI3).